Consider the following 311-residue polypeptide: DNA repair and recombination protein RadA (311 aa).

104–111 (GEFGSGKS) is a binding site for ATP.

Belongs to the eukaryotic RecA-like protein family.

Involved in DNA repair and in homologous recombination. Binds and assemble on single-stranded DNA to form a nucleoprotein filament. Hydrolyzes ATP in a ssDNA-dependent manner and promotes DNA strand exchange between homologous DNA molecules. The chain is DNA repair and recombination protein RadA from Methanosphaera stadtmanae (strain ATCC 43021 / DSM 3091 / JCM 11832 / MCB-3).